We begin with the raw amino-acid sequence, 261 residues long: Imidazole glycerol phosphate synthase subunit HisF (261 aa).

Residues aspartate 16 and aspartate 135 contribute to the active site.

This sequence belongs to the HisA/HisF family. Heterodimer of HisH and HisF.

Its subcellular location is the cytoplasm. It carries out the reaction 5-[(5-phospho-1-deoxy-D-ribulos-1-ylimino)methylamino]-1-(5-phospho-beta-D-ribosyl)imidazole-4-carboxamide + L-glutamine = D-erythro-1-(imidazol-4-yl)glycerol 3-phosphate + 5-amino-1-(5-phospho-beta-D-ribosyl)imidazole-4-carboxamide + L-glutamate + H(+). The protein operates within amino-acid biosynthesis; L-histidine biosynthesis; L-histidine from 5-phospho-alpha-D-ribose 1-diphosphate: step 5/9. Its function is as follows. IGPS catalyzes the conversion of PRFAR and glutamine to IGP, AICAR and glutamate. The HisF subunit catalyzes the cyclization activity that produces IGP and AICAR from PRFAR using the ammonia provided by the HisH subunit. This chain is Imidazole glycerol phosphate synthase subunit HisF, found in Mycobacterium marinum (strain ATCC BAA-535 / M).